The primary structure comprises 124 residues: Small ribosomal subunit protein uS12 (124 aa).

Positions 1-32 (MPTIQQLVRKGRQAKASKTKTPALKGSPQRRG) are disordered. Residues 9-18 (RKGRQAKASK) are compositionally biased toward basic residues. A 3-methylthioaspartic acid modification is found at D89.

It belongs to the universal ribosomal protein uS12 family. In terms of assembly, part of the 30S ribosomal subunit. Contacts proteins S8 and S17. May interact with IF1 in the 30S initiation complex.

Its function is as follows. With S4 and S5 plays an important role in translational accuracy. Functionally, interacts with and stabilizes bases of the 16S rRNA that are involved in tRNA selection in the A site and with the mRNA backbone. Located at the interface of the 30S and 50S subunits, it traverses the body of the 30S subunit contacting proteins on the other side and probably holding the rRNA structure together. The combined cluster of proteins S8, S12 and S17 appears to hold together the shoulder and platform of the 30S subunit. The protein is Small ribosomal subunit protein uS12 of Acidothermus cellulolyticus (strain ATCC 43068 / DSM 8971 / 11B).